The sequence spans 115 residues: Tyrosine-protein phosphatase 19 (115 aa).

The region spanning 1 to 115 is the Tyrosine-protein phosphatase domain; sequence WLMIVEQKCR…ETGSDAPMVV (115 aa). D83 contributes to the substrate binding site.

This sequence belongs to the protein-tyrosine phosphatase family.

It carries out the reaction O-phospho-L-tyrosyl-[protein] + H2O = L-tyrosyl-[protein] + phosphate. This is Tyrosine-protein phosphatase 19 (STY-19) from Styela plicata (Wrinkled sea squirt).